Reading from the N-terminus, the 92-residue chain is MIDIVKYPVLTEKATRLLENNQYTFDVDPKANKITIKALIEDFFNVKVLSVNTHRPPRKKRRIGRSEGYRPNYKRVIVTLKTGDSIKLLPET.

Belongs to the universal ribosomal protein uL23 family. Part of the 50S ribosomal subunit.

The protein resides in the plastid. It localises to the chloroplast. Binds to 23S rRNA. This chain is Large ribosomal subunit protein uL23c (rpl23), found in Mesostigma viride (Green alga).